A 367-amino-acid polypeptide reads, in one-letter code: Peptide chain release factor 2 (367 aa).

At Gln-249 the chain carries N5-methylglutamine.

The protein belongs to the prokaryotic/mitochondrial release factor family. Post-translationally, methylated by PrmC. Methylation increases the termination efficiency of RF2.

It is found in the cytoplasm. Peptide chain release factor 2 directs the termination of translation in response to the peptide chain termination codons UGA and UAA. This Thermotoga sp. (strain RQ2) protein is Peptide chain release factor 2.